A 214-amino-acid chain; its full sequence is Octanoyltransferase (214 aa).

The 177-residue stretch at 35–211 (KSNMNFIWLG…IIHEEFNFNF (177 aa)) folds into the BPL/LPL catalytic domain. Residues 75-82 (RGGEVTCH), 142-144 (SIG), and 155-157 (GFS) each bind substrate. The active-site Acyl-thioester intermediate is the Cys173.

The protein belongs to the LipB family.

It localises to the cytoplasm. The catalysed reaction is octanoyl-[ACP] + L-lysyl-[protein] = N(6)-octanoyl-L-lysyl-[protein] + holo-[ACP] + H(+). It functions in the pathway protein modification; protein lipoylation via endogenous pathway; protein N(6)-(lipoyl)lysine from octanoyl-[acyl-carrier-protein]: step 1/2. Functionally, catalyzes the transfer of endogenously produced octanoic acid from octanoyl-acyl-carrier-protein onto the lipoyl domains of lipoate-dependent enzymes. Lipoyl-ACP can also act as a substrate although octanoyl-ACP is likely to be the physiological substrate. The protein is Octanoyltransferase of Prochlorococcus marinus subsp. pastoris (strain CCMP1986 / NIES-2087 / MED4).